The following is a 678-amino-acid chain: Proprotein convertase subtilisin/kexin type 4 (678 aa).

A signal peptide spans 1-26 (MRPSQTALWLGLVLSLALLAVGWASA). Positions 27–110 (RPPIYVSSWA…QQTLRRRVKR (84 aa)) are excised as a propeptide. Positions 123–437 (QWYMNKEIEQ…YGLLDAGLLV (315 aa)) constitute a Peptidase S8 domain. Active-site charge relay system residues include Asp-155, His-196, and Ser-370. A P/Homo B domain is found at 446 to 580 (TKPQKKCTIR…TLLLYGTAED (135 aa)). N-linked (GlcNAc...) asparagine glycosylation is present at Asn-472.

The protein belongs to the peptidase S8 family. Furin subfamily. In terms of assembly, the proPCSK4 form interacts with HSPA5; the interaction takes place at the endoplasmic reticulum. Post-translationally, N-glycosylated. Synthesized in the endoplasmic reticulum as a zymogen, is matured by autocatalytic cleavage between the prodomain and the catalytic domain. In terms of tissue distribution, expressed abundantly in the testis. High levels seen in germ cells but not in Leydig, Sertoli or peritubular cells. Expressed in the pachytene spermatocytes and the round spermatids but not in the elongating spermatids. May be expressed within hormonally stimulated ovaries.

Its subcellular location is the cytoplasmic vesicle. The protein resides in the secretory vesicle. It is found in the acrosome membrane. Functionally, proprotein convertase involved in the processing of hormone and other protein precursors at sites comprised of pairs of basic amino acid residues. In males, important for ADAM2 processing as well as other acrosomal proteins with roles in fertilization and critical for normal fertilization events such as sperm capacitation, acrosome reaction and binding of sperm to zona pellucida. Plays also a role in female fertility, involved in the regulation of trophoblast migration and placental development, may be through the proteolytical processing and activation of proteins such as IGF2. May also participate in folliculogenesis in the ovaries. The sequence is that of Proprotein convertase subtilisin/kexin type 4 (Pcsk4) from Rattus norvegicus (Rat).